A 99-amino-acid polypeptide reads, in one-letter code: MNPANYLILSALLFTIGTVGVLVRRNAIVVFMSIELMLNAVNLTLVTFSRINGTLDGQVMAFFVMVVAAAEVVIGLAIILSIFRTRRSASVDDVNLLKY.

A run of 3 helical transmembrane segments spans residues 3–23 (PANYLILSALLFTIGTVGVLV), 28–48 (IVVFMSIELMLNAVNLTLVTF), and 59–79 (VMAFFVMVVAAAEVVIGLAII).

This sequence belongs to the complex I subunit 4L family. In terms of assembly, NDH-1 is composed of 14 different subunits. Subunits NuoA, H, J, K, L, M, N constitute the membrane sector of the complex.

The protein localises to the cell membrane. The catalysed reaction is a quinone + NADH + 5 H(+)(in) = a quinol + NAD(+) + 4 H(+)(out). Functionally, NDH-1 shuttles electrons from NADH, via FMN and iron-sulfur (Fe-S) centers, to quinones in the respiratory chain. The immediate electron acceptor for the enzyme in this species is believed to be a menaquinone. Couples the redox reaction to proton translocation (for every two electrons transferred, four hydrogen ions are translocated across the cytoplasmic membrane), and thus conserves the redox energy in a proton gradient. The sequence is that of NADH-quinone oxidoreductase subunit K from Frankia alni (strain DSM 45986 / CECT 9034 / ACN14a).